Consider the following 293-residue polypeptide: 4-diphosphocytidyl-2-C-methyl-D-erythritol kinase (293 aa).

K10 is a catalytic residue. P94 to S104 serves as a coordination point for ATP. D136 is a catalytic residue.

The protein belongs to the GHMP kinase family. IspE subfamily.

The enzyme catalyses 4-CDP-2-C-methyl-D-erythritol + ATP = 4-CDP-2-C-methyl-D-erythritol 2-phosphate + ADP + H(+). Its pathway is isoprenoid biosynthesis; isopentenyl diphosphate biosynthesis via DXP pathway; isopentenyl diphosphate from 1-deoxy-D-xylulose 5-phosphate: step 3/6. Catalyzes the phosphorylation of the position 2 hydroxy group of 4-diphosphocytidyl-2C-methyl-D-erythritol. This Listeria monocytogenes serovar 1/2a (strain ATCC BAA-679 / EGD-e) protein is 4-diphosphocytidyl-2-C-methyl-D-erythritol kinase.